Reading from the N-terminus, the 43-residue chain is uncharacterized protein (43 aa).

This is an uncharacterized protein from Homo sapiens (Human).